The following is a 668-amino-acid chain: Bifunctional polymyxin resistance protein ArnA (668 aa).

The tract at residues 1–307 (MSAKTVVFAY…ELGLVDGSLL (307 aa)) is formyltransferase ArnAFT. The active-site Proton donor; for formyltransferase activity is His106. (6R)-10-formyltetrahydrofolate is bound by residues Arg116 and 138 to 142 (VKRAD). Residues 317–668 (RRTRVLILGV…IERPSNKEAC (352 aa)) form a dehydrogenase ArnADH region. NAD(+) is bound by residues Asp350 and 371–372 (DI). UDP-alpha-D-glucuronate is bound by residues Ala396, Tyr401, and 435–436 (TS). Catalysis depends on Glu437, which acts as the Proton acceptor; for decarboxylase activity. UDP-alpha-D-glucuronate contacts are provided by residues Arg463, Asn494, 528–537 (RLFDGGEQKR), and Tyr615. The Proton donor; for decarboxylase activity role is filled by Arg621.

It in the N-terminal section; belongs to the Fmt family. UDP-L-Ara4N formyltransferase subfamily. The protein in the C-terminal section; belongs to the NAD(P)-dependent epimerase/dehydratase family. UDP-glucuronic acid decarboxylase subfamily. As to quaternary structure, homohexamer, formed by a dimer of trimers.

The catalysed reaction is UDP-alpha-D-glucuronate + NAD(+) = UDP-beta-L-threo-pentopyranos-4-ulose + CO2 + NADH. It carries out the reaction UDP-4-amino-4-deoxy-beta-L-arabinose + (6R)-10-formyltetrahydrofolate = UDP-4-deoxy-4-formamido-beta-L-arabinose + (6S)-5,6,7,8-tetrahydrofolate + H(+). It participates in nucleotide-sugar biosynthesis; UDP-4-deoxy-4-formamido-beta-L-arabinose biosynthesis; UDP-4-deoxy-4-formamido-beta-L-arabinose from UDP-alpha-D-glucuronate: step 1/3. The protein operates within nucleotide-sugar biosynthesis; UDP-4-deoxy-4-formamido-beta-L-arabinose biosynthesis; UDP-4-deoxy-4-formamido-beta-L-arabinose from UDP-alpha-D-glucuronate: step 3/3. Its pathway is bacterial outer membrane biogenesis; lipopolysaccharide biosynthesis. Bifunctional enzyme that catalyzes the oxidative decarboxylation of UDP-glucuronic acid (UDP-GlcUA) to UDP-4-keto-arabinose (UDP-Ara4O) and the addition of a formyl group to UDP-4-amino-4-deoxy-L-arabinose (UDP-L-Ara4N) to form UDP-L-4-formamido-arabinose (UDP-L-Ara4FN). The modified arabinose is attached to lipid A and is required for resistance to polymyxin and cationic antimicrobial peptides. This is Bifunctional polymyxin resistance protein ArnA from Pseudomonas fluorescens (strain Pf0-1).